The chain runs to 503 residues: Transforming protein rel polyprotein (503 aa).

In terms of domain architecture, RHD spans 16 to 305 (PYIEIFEQPR…GNKAKRQRST (290 aa)). S275 is subject to Phosphoserine; by host PKA. 2 disordered regions span residues 286-306 (RYLPDEEDPSGNKAKRQRSTL) and 318-342 (AVTERPKAAPIPTVNPEGKLKKEPN). Positions 298-303 (KAKRQR) match the Nuclear localization signal motif.

Its subcellular location is the host cytoplasm. Its function is as follows. This transforming protein appears to have a protein-kinase activity. The polypeptide is Transforming protein rel polyprotein (V-REL) (Galliformes).